A 1036-amino-acid polypeptide reads, in one-letter code: MKFFTASTLFLLAAQSLNSGVSASLSDPANTPTILADDIVHGYTPATYLSSVPTLLKRATTSYNYNTSSASSSSLTSSSAASSSLTSSSSLASSSTNSTTSASPTSSSLTSSSATSSSLASSSTTSSSLASSSITSSSLASSSITSSSLASSSTTSSSLASSSTNSTTSATPTSSATSSSLSSTAASNSATSSSLASSSLNSTTSATATSSSLSSTAASNSATSSSLASSSLNSTTSATATSSSISSTVSSSTPLTSSNSTTAATSASATSSSAQYNTSSLLPSSTPSSTPLSSANSTTATSASSTPLTSVNSTTTTSASSTPLSSVSSANSTTATSTSSTPLSSVNSTTATSASSTPLTSVNSTTATSASSTPLTSVNSTSATSASSTPLTSANSTTSTSVSSTAPSYNTSSVLPTSSVSSTPLSSANSTTATSASSTPLSSVNSTTATSASSTPLSSVNSTTATSASSTPLTSVNSTTATSASSTPLTSVNSTSATSASSTPLTSANSTTSTSVSSTAPSYNTSSVLPTSSVSSTPLSSANSTTATSASSTPLTSVNSTTATSASSTPFGNSTITSSASGSTGEFTNTNSGNGDVSGSVTTPTSTPLSNSTVAPTSTFTSSGFNTTSGLPTSSASTPLSNSTVAPTSTFTSSGFNTTSGLPTSSASTPSSNSSIVPTSTFTSSGFNTTSGLPTSSASTPLSNSTVAPTSTFTSSGFNTTSGLPTSSVSTPLSNSSAYPSSGSSTFSRLSSTLTSSIIPTETFGSTSGSATGTRPTGSSSQGSVVPTTSTGSSVTSTGTGTTTGVTEVTETSTFETTEIITSTIEPTTASGTGGGNPTAAPTNEPTVTTGTETTEGTATYTEPTTFTSTFSFTTTIIGGTTTIIPVNPGNPSSSVSAPPTTSFTPGPGGSGYPSYSNTTQGMNTTSIWNSSNSTIVSNVTATITGNVTITTGDLTTIDPTTFTSTYLSSGFQTVSNTTATSGSDDDVKTASTSSSTSYTSSSSSSSSTTSAASSKASVSMGLNGLMIAAVILLVA.

A signal peptide spans Met1–Ala23. Asn66, Asn97, Asn165, Asn201, Asn233, Asn259, Asn277, Asn296, Asn312, Asn331, Asn347, Asn363, Asn379, Asn395, Asn410, Asn429, Asn445, Asn461, Asn477, Asn493, Asn509, Asn524, Asn543, Asn559, and Asn573 each carry an N-linked (GlcNAc...) asparagine glycan. Disordered regions lie at residues Ser88–Ala130 and Ser147–Ser183. Over residues Ser243–Gly585 the composition is skewed to low complexity. A disordered region spans residues Ser243–Thr710. Positions Glu586–Gly595 are enriched in polar residues. Residues Val597–Gly630 are compositionally biased toward low complexity. 9 N-linked (GlcNAc...) asparagine glycosylation sites follow: Asn611, Asn626, Asn642, Asn657, Asn673, Asn688, Asn704, Asn719, and Asn735. The segment covering Leu631–Pro647 has biased composition (polar residues). Positions Thr648–Gly692 are enriched in low complexity. Residues Leu693–Pro709 are compositionally biased toward polar residues. Composition is skewed to low complexity over residues Ser722–Ser831, Pro838–Thr862, and Ile885–Pro906. Disordered regions lie at residues Ser722–Thr862 and Ile885–Asn918. Asn918, Asn924, Asn930, Asn933, Asn939, Asn947, and Asn977 each carry an N-linked (GlcNAc...) asparagine glycan. The tract at residues Thr978–Ser1011 is disordered. The segment covering Thr990–Ser1011 has biased composition (low complexity). Ser1011 carries GPI-anchor amidated serine lipidation. The propeptide at Ala1012–Ala1036 is removed in mature form.

The protein localises to the cell membrane. Functionally, may be involved in agglutination during conjugation or other aspects of colony formation. Induces flocculation when overexpressed. This is Putative GPI-anchored protein pfl2 from Schizosaccharomyces pombe (strain 972 / ATCC 24843) (Fission yeast).